Consider the following 157-residue polypeptide: Baculoviral IAP repeat-containing protein 5.2-A (157 aa).

Residues 31-101 (RLRTFSNWPF…KHSPSCLFIA (71 aa)) form a BIR repeat. Position 47 is a phosphothreonine; by CDK1 (Thr47). The Zn(2+) site is built by Cys70, Cys73, His90, and Cys97.

This sequence belongs to the IAP family. In terms of assembly, component of the CPC at least composed of survivin/birc5, incenp, cdca8/borealin and/or cdca9/dasra-A, and aurkb/aurora-B. Interacts directly with incenp (via N-terminus). Interacts with rxra; the interaction is stronger in the absence of 9-cis retinoic acids. In terms of processing, ubiquitination is required for centrosome-targeting. As to expression, highly expressed in vascular endothelial cells of tadpoles.

The protein resides in the cytoplasm. It is found in the nucleus. The protein localises to the chromosome. It localises to the centromere. Its subcellular location is the cytoskeleton. The protein resides in the spindle. In terms of biological role, component of the chromosomal passenger complex (CPC), a complex that acts as a key regulator of mitosis. The CPC complex has essential functions at the centromere in ensuring correct chromosome alignment and segregation and is required for chromatin-induced microtubule stabilization and spindle assembly. Does not appear to exhibit anti-apoptotic activity. Plays a role in increasing blood vessel size during development. In Xenopus laevis (African clawed frog), this protein is Baculoviral IAP repeat-containing protein 5.2-A (birc5.2-a).